The following is a 66-amino-acid chain: Conotoxin Bu1.4 (66 aa).

The first 23 residues, 1 to 23, serve as a signal peptide directing secretion; the sequence is MGMRMRMMFTVFLLVVLANTVVS. Residues 24 to 46 constitute a propeptide that is removed on maturation; it reads FPSDRDSDGADAEASDEPVEFER. The tract at residues 25–48 is disordered; the sequence is PSDRDSDGADAEASDEPVEFERDE. Positions 32–42 are enriched in acidic residues; that stretch reads GADAEASDEPV. Intrachain disulfides connect C51–C57 and C52–C62. Position 63 is a threonine amide (T63).

It belongs to the conotoxin A superfamily. As to expression, expressed by the venom duct.

It localises to the secreted. In Conus bullatus (Bubble cone), this protein is Conotoxin Bu1.4.